We begin with the raw amino-acid sequence, 648 residues long: 1-deoxy-D-xylulose-5-phosphate synthase (648 aa).

Residues H73 and S114–A116 contribute to the thiamine diphosphate site. Mg(2+) is bound at residue D145. Residues G146–A147, N175, Y286, and E367 contribute to the thiamine diphosphate site. N175 contacts Mg(2+).

The protein belongs to the transketolase family. DXPS subfamily. In terms of assembly, homodimer. Mg(2+) is required as a cofactor. Thiamine diphosphate serves as cofactor.

The enzyme catalyses D-glyceraldehyde 3-phosphate + pyruvate + H(+) = 1-deoxy-D-xylulose 5-phosphate + CO2. The protein operates within metabolic intermediate biosynthesis; 1-deoxy-D-xylulose 5-phosphate biosynthesis; 1-deoxy-D-xylulose 5-phosphate from D-glyceraldehyde 3-phosphate and pyruvate: step 1/1. Functionally, catalyzes the acyloin condensation reaction between C atoms 2 and 3 of pyruvate and glyceraldehyde 3-phosphate to yield 1-deoxy-D-xylulose-5-phosphate (DXP). This Rhodococcus erythropolis (strain PR4 / NBRC 100887) protein is 1-deoxy-D-xylulose-5-phosphate synthase.